Here is a 328-residue protein sequence, read N- to C-terminus: Phenylalanine--tRNA ligase alpha subunit (328 aa).

Position 253 (Glu-253) interacts with Mg(2+).

It belongs to the class-II aminoacyl-tRNA synthetase family. Phe-tRNA synthetase alpha subunit type 1 subfamily. Tetramer of two alpha and two beta subunits. It depends on Mg(2+) as a cofactor.

It localises to the cytoplasm. It catalyses the reaction tRNA(Phe) + L-phenylalanine + ATP = L-phenylalanyl-tRNA(Phe) + AMP + diphosphate + H(+). This Coxiella burnetii (strain CbuG_Q212) (Coxiella burnetii (strain Q212)) protein is Phenylalanine--tRNA ligase alpha subunit.